Here is a 778-residue protein sequence, read N- to C-terminus: GRIP and coiled-coil domain-containing protein 1 (778 aa).

The stretch at Ser13–Val61 forms a coiled coil. Disordered regions lie at residues Ser70–Arg157, Tyr186–Arg208, and Gly617–Ser638. Residues Val83–Asp93 show a composition bias toward basic and acidic residues. Low complexity-rich tracts occupy residues Ser94–Ser109 and Ala133–Ser152. Residues Ser152–Val702 adopt a coiled-coil conformation. Residues Gln716 to Leu766 form the GRIP domain.

It is found in the cytoplasm. The protein localises to the golgi apparatus membrane. Probably involved in maintaining Golgi structure. The protein is GRIP and coiled-coil domain-containing protein 1 (Gcc1) of Mus musculus (Mouse).